An 89-amino-acid chain; its full sequence is Large ribosomal subunit protein bL31B (89 aa).

Belongs to the bacterial ribosomal protein bL31 family. Type B subfamily. As to quaternary structure, part of the 50S ribosomal subunit.

The polypeptide is Large ribosomal subunit protein bL31B (Enterococcus faecalis (strain ATCC 700802 / V583)).